The following is a 499-amino-acid chain: Maturase K (499 aa).

Belongs to the intron maturase 2 family. MatK subfamily.

It localises to the plastid. It is found in the chloroplast. Usually encoded in the trnK tRNA gene intron. Probably assists in splicing its own and other chloroplast group II introns. This is Maturase K from Gleditsia triacanthos (Common honey-locust).